We begin with the raw amino-acid sequence, 533 residues long: DEAD-box ATP-dependent RNA helicase CshA (533 aa).

The short motif at 2–30 (TTFRELGLSDSLLQSVESMGFEEATPIQA) is the Q motif element. In terms of domain architecture, Helicase ATP-binding spans 33–203 (IPHALQGKDI…ERFMTEPQHI (171 aa)). 46–53 (AQTGTGKT) contacts ATP. Residues 151–154 (DEAD) carry the DEAD box motif. Positions 214-374 (NIQQFYLEVQ…RMDAPTLDEA (161 aa)) constitute a Helicase C-terminal domain. The segment at 428-533 (TTPIALTSEP…ERKHHSRPQA (106 aa)) is disordered. Over residues 458-512 (DGNRNRSRDGRGGGDGRNRDRNRDGRNRDGNRDRNRDGNRDRNRDGGSRGRRGEG) the composition is skewed to basic and acidic residues. Basic residues predominate over residues 524-533 (ERKHHSRPQA).

Belongs to the DEAD box helicase family. CshA subfamily. In terms of assembly, oligomerizes, may be a member of the RNA degradosome.

It localises to the cytoplasm. The catalysed reaction is ATP + H2O = ADP + phosphate + H(+). Its function is as follows. DEAD-box RNA helicase possibly involved in RNA degradation. May work in conjunction with the cold shock proteins to ensure proper initiation of transcription at low and optimal temperatures. Unwinds dsRNA in both 5'- and 3'-directions and shows RNA-dependent ATPase activity. Probably has a somewhat redundant function with cshB, as cshA can partially complement the growth effects of a cshB deletion. Plays a role in adaptation to cold, oxididant and pH stress. The protein is DEAD-box ATP-dependent RNA helicase CshA of Bacillus cereus (strain ATCC 14579 / DSM 31 / CCUG 7414 / JCM 2152 / NBRC 15305 / NCIMB 9373 / NCTC 2599 / NRRL B-3711).